Here is a 515-residue protein sequence, read N- to C-terminus: Bifunctional purine biosynthesis protein PurH (515 aa).

Positions 1–145 (MTKRALISVS…KNHASVTVVV (145 aa)) constitute an MGS-like domain.

This sequence belongs to the PurH family.

It catalyses the reaction (6R)-10-formyltetrahydrofolate + 5-amino-1-(5-phospho-beta-D-ribosyl)imidazole-4-carboxamide = 5-formamido-1-(5-phospho-D-ribosyl)imidazole-4-carboxamide + (6S)-5,6,7,8-tetrahydrofolate. The enzyme catalyses IMP + H2O = 5-formamido-1-(5-phospho-D-ribosyl)imidazole-4-carboxamide. The protein operates within purine metabolism; IMP biosynthesis via de novo pathway; 5-formamido-1-(5-phospho-D-ribosyl)imidazole-4-carboxamide from 5-amino-1-(5-phospho-D-ribosyl)imidazole-4-carboxamide (10-formyl THF route): step 1/1. It participates in purine metabolism; IMP biosynthesis via de novo pathway; IMP from 5-formamido-1-(5-phospho-D-ribosyl)imidazole-4-carboxamide: step 1/1. This Streptococcus suis (strain 98HAH33) protein is Bifunctional purine biosynthesis protein PurH.